A 575-amino-acid chain; its full sequence is Phosphoenolpyruvate-protein phosphotransferase (575 aa).

His-191 acts as the Tele-phosphohistidine intermediate in catalysis. 2 residues coordinate phosphoenolpyruvate: Arg-298 and Arg-334. Mg(2+) is bound by residues Glu-435 and Asp-459. Residues 458-459 (ND) and Arg-469 each bind phosphoenolpyruvate. The active-site Proton donor is Cys-506.

This sequence belongs to the PEP-utilizing enzyme family. In terms of assembly, homodimer. Mg(2+) is required as a cofactor.

The protein localises to the cytoplasm. It catalyses the reaction L-histidyl-[protein] + phosphoenolpyruvate = N(pros)-phospho-L-histidyl-[protein] + pyruvate. Its function is as follows. General (non sugar-specific) component of the phosphoenolpyruvate-dependent sugar phosphotransferase system (sugar PTS). This major carbohydrate active-transport system catalyzes the phosphorylation of incoming sugar substrates concomitantly with their translocation across the cell membrane. Enzyme I transfers the phosphoryl group from phosphoenolpyruvate (PEP) to the phosphoryl carrier protein (HPr). This chain is Phosphoenolpyruvate-protein phosphotransferase (ptsI), found in Enterococcus faecalis (strain ATCC 700802 / V583).